We begin with the raw amino-acid sequence, 203 residues long: Twist-related protein 1 (203 aa).

Low complexity predominate over residues 1-18 (MMQDVSSSPVSPADDSLS). Residues 1 to 106 (MMQDVSSSPV…GGGSPQSYEE (106 aa)) are disordered. Positions 34–43 (RGGRKRRSSS) are enriched in basic residues. Gly residues-rich tracts occupy residues 47 to 66 (AGGGAGPGGAASGGVGGGDE) and 81 to 100 (GCGGGGGGGAGGGSSSGGGS). In terms of domain architecture, bHLH spans 109–160 (TQRVMANVRERQRTQSLNEAFAALRKIIPTLPSDKLSKIQTLKLAARYIDFL). Residues 162–192 (QVLQSDELDSKMASCSYVAHERLSYAFSVWR) form a sufficient for transactivation activity region.

Efficient DNA binding requires dimerization with another bHLH protein. Homodimer or heterodimer with E proteins such as TCF3. ID1 binds preferentially to TCF3 but does not interact efficiently with TWIST1 so ID1 levels control the amount of TCF3 available to dimerize with TWIST and thus determine the type of dimer formed.

It is found in the nucleus. Its function is as follows. Acts as a transcriptional regulator. Inhibits myogenesis by sequestrating E proteins, inhibiting trans-activation by MEF2, and inhibiting DNA-binding by MYOD1 through physical interaction. This interaction probably involves the basic domains of both proteins. Also represses expression of pro-inflammatory cytokines such as TNFA and IL1B. Regulates cranial suture patterning and fusion. Activates transcription as a heterodimer with E proteins. Regulates gene expression differentially, depending on dimer composition. Homodimers induce expression of FGFR2 and POSTN while heterodimers repress FGFR2 and POSTN expression and induce THBS1 expression. Heterodimerization is also required for osteoblast differentiation. Represses the activity of the circadian transcriptional activator: NPAS2-BMAL1 heterodimer. In Pongo pygmaeus (Bornean orangutan), this protein is Twist-related protein 1 (TWIST1).